A 1324-amino-acid polypeptide reads, in one-letter code: Synaptojanin-1 (1324 aa).

One can recognise an SAC domain in the interval 119-442 (VRKVLNSGNF…GDSISKIYAG (324 aa)). The tract at residues 475–859 (AIDVLLLGNT…GRAELKTSDH (385 aa)) is catalytic. Phosphoserine is present on residues serine 820 and serine 830. The RRM domain occupies 902–971 (SSLPENNFFN…RTITITLKSP (70 aa)). Positions 1030–1324 (LQPSSSSALA…SDPFEDLSLN (295 aa)) are disordered. Residues 1080 to 1103 (ASQSSPVDTLPATQLQQKDSSQTL) show a composition bias toward polar residues. Residues 1108–1130 (PPPPRPVAPPARPAPPQRPPPPS) show a composition bias toward pro residues. Residues 1138-1156 (ARERVWSTRKAQERPRRDN) are compositionally biased toward basic and acidic residues. Position 1186 is an omega-N-methylarginine (arginine 1186). Position 1205 is a phosphothreonine (threonine 1205). Serine 1277 bears the Phosphoserine mark. Residues 1278–1292 (SHSLPSDAPAAAAGA) show a composition bias toward low complexity.

The protein belongs to the synaptojanin family. It in the central section; belongs to the inositol 1,4,5-trisphosphate 5-phosphatase family. Interacts with ASH/GRB2. Interacts with PACSIN1, PACSIN2 and PACSIN3. Interacts with AMPH, SH3GL1, SH3GL2 and SH3GL3. Interacts with MYO1E (via SH3 domain). Interacts with BIN1 and DNM1. Interacts with EPS15. As to expression, ubiquitously expressed with highest levels in brain.

It localises to the cytoplasm. The protein resides in the perinuclear region. It carries out the reaction a 1,2-diacyl-sn-glycero-3-phospho-(1D-myo-inositol-4,5-bisphosphate) + H2O = a 1,2-diacyl-sn-glycero-3-phospho-(1D-myo-inositol 4-phosphate) + phosphate. Its function is as follows. Phosphatase that acts on various phosphoinositides, including phosphatidylinositol 4-phosphate, phosphatidylinositol (4,5)-bisphosphate and phosphatidylinositol (3,4,5)-trisphosphate. Has a role in clathrin-mediated endocytosis. Hydrolyzes PIP2 bound to actin regulatory proteins resulting in the rearrangement of actin filaments downstream of tyrosine kinase and ASH/GRB2. The chain is Synaptojanin-1 (SYNJ1) from Bos taurus (Bovine).